The following is a 1503-amino-acid chain: Protein Skeletor, isoforms D/E (1503 aa).

A signal peptide spans 1-28 (MLAMKDKPWLLLFGLLAALSCLASFGDA). 2 DM13 domains span residues 34–143 (GTKI…VSIP) and 151–258 (PQKI…VRLP). Residues 287-419 (LAFEVRWAVA…GAESVVWAIG (133 aa)) form the DOMON domain. 4 disordered regions span residues 451 to 491 (PLPE…NVEP), 830 to 857 (NPNLNPNHPNQNPIPNPHQKPNVTPTEI), 1086 to 1106 (IFNQPGGKGKGDQKPKASSVS), and 1426 to 1503 (EFRG…GRRA). The span at 830 to 840 (NPNLNPNHPNQ) shows a compositional bias: low complexity. The span at 1452–1491 (SSSSGSTIYPYSSSTGASTSTVSSSASSPLSSSSLRPIST) shows a compositional bias: low complexity.

In terms of assembly, interacts with Chro and Mgtor as part of a macromolecular complex forming the spindle matrix. Chro colocalizes with Skeletor (Skel) on the chromosomes at interphase and on spindle during metaphase.

It localises to the cytoplasm. The protein resides in the cytoskeleton. It is found in the spindle. The protein localises to the nucleus. Its subcellular location is the nucleolus. It localises to the chromosome. Provides structural support to stabilize and organize the microtubule spindle during mitosis (within embryonic somatic cells) and meiosis (within spermatocytes). The role in mitosis regulation depends on the Ran pathway. The polypeptide is Protein Skeletor, isoforms D/E (Drosophila melanogaster (Fruit fly)).